We begin with the raw amino-acid sequence, 1162 residues long: Topoisomerase 1-associated factor 1 (1162 aa).

Disordered stretches follow at residues 977-1017 and 1127-1162; these read TEGR…EANA and TQVV…DTEY. The span at 993 to 1003 shows a compositional bias: basic residues; that stretch reads QRSKGKRKAIA.

Belongs to the timeless family. In terms of assembly, component of the fork protection complex (FPC) consisting of TOF1 and CSM3.

The protein resides in the nucleus. Functionally, forms a fork protection complex (FPC) with CSM3 and which is required for chromosome segregation during meiosis and DNA damage repair. FPC coordinates leading and lagging strand synthesis and moves with the replication fork. FPC stabilizes replication forks in a configuration that is recognized by replication checkpoint sensors. In Kluyveromyces lactis (strain ATCC 8585 / CBS 2359 / DSM 70799 / NBRC 1267 / NRRL Y-1140 / WM37) (Yeast), this protein is Topoisomerase 1-associated factor 1 (TOF1).